The chain runs to 403 residues: Phosphoglycerate kinase (403 aa).

Residues 24-26, Arg39, 62-65, Arg121, and Arg161 each bind substrate; these read DLN and HLGR. ATP-binding positions include Lys211, Gly299, Glu330, and 359–362; that span reads GGDS.

This sequence belongs to the phosphoglycerate kinase family. In terms of assembly, monomer.

It is found in the cytoplasm. It catalyses the reaction (2R)-3-phosphoglycerate + ATP = (2R)-3-phospho-glyceroyl phosphate + ADP. It functions in the pathway carbohydrate degradation; glycolysis; pyruvate from D-glyceraldehyde 3-phosphate: step 2/5. The protein is Phosphoglycerate kinase of Corynebacterium kroppenstedtii (strain DSM 44385 / JCM 11950 / CIP 105744 / CCUG 35717).